The chain runs to 496 residues: Tripartite motif-containing protein 30A (496 aa).

The RING-type zinc finger occupies 15–59 (CPICLELLKEPVSADCNHSFCRACITLNYESNRNTDGKGNCPVCR). A B box-type zinc finger spans residues 91–132 (QKVNICAQHGEKLRLFCRKDMMVICWLCERSQEHRGHQTALI). Residues C96, H99, C118, and H124 each coordinate Zn(2+). The stretch at 173–239 (NQIQINVENV…RDLISDVEHH (67 aa)) forms a coiled coil. The tract at residues 205-210 (KKEKKE) is highly hydrophilic. Positions 268–276 (TVPQKRKRT) match the Nuclear localization signal motif. The B30.2/SPRY domain occupies 281 to 496 (DLKGMLQVYQ…EPMTICGPPS (216 aa)).

As to quaternary structure, homomultimer. Interacts with NR2C2/TAK1, TAB2 and TAB3. Does not interact with NLRP3, NLRC4 or TAB1. Highly expressed in spleen and lymph nodes (at protein level).

The protein localises to the cytoplasm. It is found in the nucleus. Its function is as follows. Trans-acting factor that regulates gene expression of interleukin 2 receptor alpha chain. May affect IL2R-alpha expression through cis-acting negative regulatory elements or through competition with proteins that bind to enhancer or activator sequences. Negatively regulates Toll-like receptor (TLR)-mediated activation of NFKB by promoting degradation of TAB2 and TAB3 and preventing TRAF6 autoubiquitination. Negatively regulates production of reactive oxygen species (ROS) which inhibits activation of the NLRP3 inflammasome complex. This, in turn, regulates activation of CASP1 and subsequent cleavage of IL1B and IL18. No activity detected against a range of retroviruses including a number of lentiviruses, gammaretroviruses and betaretroviruses. The chain is Tripartite motif-containing protein 30A (Trim30a) from Mus musculus (Mouse).